We begin with the raw amino-acid sequence, 445 residues long: tRNA modification GTPase MnmE (445 aa).

(6S)-5-formyl-5,6,7,8-tetrahydrofolate-binding residues include Arg24, Glu81, and Lys121. The TrmE-type G domain maps to 218–369; it reads GLTVVIAGPP…LLEALVGFAR (152 aa). GTP-binding positions include 228-233, 247-253, 272-275, and 350-352; these read NAGKST, SPHAGTT, DTAG, and SAR. Mg(2+)-binding residues include Ser232 and Thr253. Lys445 contributes to the (6S)-5-formyl-5,6,7,8-tetrahydrofolate binding site.

The protein belongs to the TRAFAC class TrmE-Era-EngA-EngB-Septin-like GTPase superfamily. TrmE GTPase family. In terms of assembly, homodimer. Heterotetramer of two MnmE and two MnmG subunits. K(+) serves as cofactor.

Its subcellular location is the cytoplasm. Exhibits a very high intrinsic GTPase hydrolysis rate. Involved in the addition of a carboxymethylaminomethyl (cmnm) group at the wobble position (U34) of certain tRNAs, forming tRNA-cmnm(5)s(2)U34. This is tRNA modification GTPase MnmE from Bradyrhizobium sp. (strain BTAi1 / ATCC BAA-1182).